Here is a 132-residue protein sequence, read N- to C-terminus: Small ribosomal subunit protein uS9 (132 aa).

The protein belongs to the universal ribosomal protein uS9 family.

The polypeptide is Small ribosomal subunit protein uS9 (rps9) (Halobacterium salinarum (strain ATCC 700922 / JCM 11081 / NRC-1) (Halobacterium halobium)).